A 271-amino-acid chain; its full sequence is Energy-coupling factor transporter ATP-binding protein EcfA (271 aa).

Residues 2–231 (ISIQNLTFYY…PLFLQQYKLT (230 aa)) form the ABC transporter domain. Residue 34–41 (GHNGSGKS) coordinates ATP.

This sequence belongs to the ABC transporter superfamily. Energy-coupling factor EcfA family. As to quaternary structure, forms a stable energy-coupling factor (ECF) transporter complex composed of 2 membrane-embedded substrate-binding proteins (S component), 2 ATP-binding proteins (A component) and 2 transmembrane proteins (T component).

Its subcellular location is the cell membrane. Functionally, ATP-binding (A) component of a common energy-coupling factor (ECF) ABC-transporter complex. Unlike classic ABC transporters this ECF transporter provides the energy necessary to transport a number of different substrates. This is Energy-coupling factor transporter ATP-binding protein EcfA from Aster yellows witches'-broom phytoplasma (strain AYWB).